A 130-amino-acid polypeptide reads, in one-letter code: MAATQYYGTGRRKTSTARVFAKVGTGNIIVNKLPLDEYFGRETSRMVVRQPLELVEMTDKLDIMVTVKGGGNTGQAGAIRHGITRALMELDESLRPSLRAAGFVTRDARKVERKKVGLRKARRKPQFSKR.

Belongs to the universal ribosomal protein uS9 family.

This is Small ribosomal subunit protein uS9 from Shewanella halifaxensis (strain HAW-EB4).